The chain runs to 528 residues: Glutamyl-tRNA(Gln) amidotransferase subunit B, mitochondrial (528 aa).

The protein belongs to the GatB/GatE family. GatB subfamily. In terms of assembly, subunit of the heterotrimeric GatFAB amidotransferase (AdT) complex, composed of A, B and F subunits.

Its subcellular location is the mitochondrion. The catalysed reaction is L-glutamyl-tRNA(Gln) + L-glutamine + ATP + H2O = L-glutaminyl-tRNA(Gln) + L-glutamate + ADP + phosphate + H(+). Its function is as follows. Allows the formation of correctly charged Gln-tRNA(Gln) through the transamidation of misacylated Glu-tRNA(Gln) in the mitochondria. The reaction takes place in the presence of glutamine and ATP through an activated gamma-phospho-Glu-tRNA(Gln). The sequence is that of Glutamyl-tRNA(Gln) amidotransferase subunit B, mitochondrial from Clavispora lusitaniae (strain ATCC 42720) (Yeast).